A 170-amino-acid polypeptide reads, in one-letter code: 4-hydroxyphenylacetate 3-monooxygenase reductase component (170 aa).

Belongs to the non-flavoprotein flavin reductase family. HpaC subfamily. Monomer. HPA 3-hydroxylase consists of a reductase component HpaC and an oxygenase component HpaB. Some form of interactions between the reductase and the oxygenase facilitate the transfer of FADH(-) to the oxygenase in P.aeruginosa, although interactions are not required in other species.

It carries out the reaction FADH2 + NAD(+) = FAD + NADH + 2 H(+). It participates in aromatic compound metabolism; 4-hydroxyphenylacetate degradation; pyruvate and succinate semialdehyde from 4-hydroxyphenylacetate: step 1/7. Its activity is regulated as follows. The rate of FAD reduction is independent of the presence of HPA, demonstrating that, in contrast to HPAH from A.baumannii, the activity of the HPAH reductase is not allosterically regulated by the substrate. Its function is as follows. Reductase component of the 4-hydroxyphenylacetate (HPA) 3-hydroxylase. Catalyzes the reduction of FAD by NADH. The reduced flavin is then transferred to the oxygenase component HpaB. Is also able to reduce FMN and riboflavin, but preferentially binds FAD. Has no activity with NADPH as the reductant. This is 4-hydroxyphenylacetate 3-monooxygenase reductase component from Pseudomonas aeruginosa (strain ATCC 15692 / DSM 22644 / CIP 104116 / JCM 14847 / LMG 12228 / 1C / PRS 101 / PAO1).